Consider the following 425-residue polypeptide: Glutamyl-tRNA reductase (425 aa).

Residues 51–54 (TCNR), S111, 116–118 (DMQ), and Q122 contribute to the substrate site. C52 functions as the Nucleophile in the catalytic mechanism. Residue 191–196 (GLGEIG) participates in NADP(+) binding.

The protein belongs to the glutamyl-tRNA reductase family. As to quaternary structure, homodimer.

The enzyme catalyses (S)-4-amino-5-oxopentanoate + tRNA(Glu) + NADP(+) = L-glutamyl-tRNA(Glu) + NADPH + H(+). Its pathway is porphyrin-containing compound metabolism; protoporphyrin-IX biosynthesis; 5-aminolevulinate from L-glutamyl-tRNA(Glu): step 1/2. Its function is as follows. Catalyzes the NADPH-dependent reduction of glutamyl-tRNA(Glu) to glutamate 1-semialdehyde (GSA). The protein is Glutamyl-tRNA reductase of Cytophaga hutchinsonii (strain ATCC 33406 / DSM 1761 / CIP 103989 / NBRC 15051 / NCIMB 9469 / D465).